Reading from the N-terminus, the 413-residue chain is Phosphoglycerate kinase (413 aa).

Substrate is bound by residues 19–21, Arg34, 57–60, Arg114, and Arg154; these read DLN and HQSK. ATP contacts are provided by residues Glu332 and 358–361; that span reads GGHS.

Belongs to the phosphoglycerate kinase family. As to quaternary structure, monomer.

The protein resides in the cytoplasm. It carries out the reaction (2R)-3-phosphoglycerate + ATP = (2R)-3-phospho-glyceroyl phosphate + ADP. The protein operates within carbohydrate degradation; glycolysis; pyruvate from D-glyceraldehyde 3-phosphate: step 2/5. In Thermococcus sibiricus (strain DSM 12597 / MM 739), this protein is Phosphoglycerate kinase.